The chain runs to 79 residues: Transcriptional regulator SplA (79 aa).

Its function is as follows. Regulator of the spore photoproduct lyase operon (splAB). This is Transcriptional regulator SplA (splA) from Bacillus subtilis (strain 168).